A 456-amino-acid polypeptide reads, in one-letter code: Non-structural protein V (456 aa).

The interval 53-92 (SGESEQVEGGMSKDDGDVERRNLEDLSSTSPTDGTIGKRV) is disordered. Residues 63–76 (MSKDDGDVERRNLE) show a composition bias toward basic and acidic residues. The residue at position 257 (Ser-257) is a Phosphoserine; by host. The interval 265-324 (ISPEDEEPSSVGGKPNESIGRTIEGQSIRDNLQAKDNKSTDVPGAGPKDSAVKEEPPQKR) is disordered. Ser-350 carries the post-translational modification Phosphoserine; by host. Positions 408, 427, 431, 443, 445, 448, 452, and 455 each coordinate Zn(2+).

Belongs to the paramyxoviruses V protein family. As to quaternary structure, interacts with host IFIH1/MDA5, DHX58/LGP2, STAT1 and STAT2. Interacts (via N-terminus) with host UBXN1 (via C-terminal UBX domain); this interaction inhibits interferon-alpha/beta (IFN-alpha/beta) production. Interacts with host RIGI regulatory protein (via CARDs domain) and host TRIM25 (via SPRY domain); these interactions prevent TRIM25-mediated ubiquitination of RIG-I and disrupts downstream RIG-I signaling.

It is found in the host cytoplasm. Its function is as follows. Plays an essential role in the inhibition of host immune response. Prevents the establishment of cellular antiviral state by blocking interferon-alpha/beta (IFN-alpha/beta) production and signaling pathway. Interacts with host IFIH1/MDA5 and DHX58/LGP2 to inhibit the transduction pathway involved in the activation of IFN-beta promoter, thus protecting the virus against cell antiviral state. Blocks the type I interferon signaling pathway by interacting with host STAT1 and STAT2 and thereby inhibiting their phosphorylation and subsequent nuclear translocation. Efficiently blocks the type II interferon signaling pathway. Suppresses interferon induction by interacting with and stabilizing host UBXN1, a negative regulator of both RIG-I-like receptors (RLR) and NF-kappa-B pathways. Blocks the type I interferon signaling pathway by disrupting the RIG-I signaling pathway. This Cynopterus brachyotis (Lesser short-nosed fruit bat) protein is Non-structural protein V (P/V/C).